The sequence spans 228 residues: uncharacterized protein (228 aa).

S-adenosyl-L-methionine-binding residues include glycine 179, isoleucine 199, and leucine 208.

Belongs to the class IV-like SAM-binding methyltransferase superfamily. RNA methyltransferase TrmH family.

This is an uncharacterized protein from Borreliella burgdorferi (strain ATCC 35210 / DSM 4680 / CIP 102532 / B31) (Borrelia burgdorferi).